The primary structure comprises 569 residues: MSYKIDRNTYAQTFGPTTGDRVRLADTELFIEVEKDLTTYGDEVKFGGGKVIRDGMGQSQVRRADGAVDTVITNALIVDWWGIIKADVGIKDGMIFEIGKAGNPDIQDNVDIVIGASTEVIAGEGHILTAGSIDTHIHFICPQQIETALASGITTMLGGGTGPATGTNATTCTPGSFHISRMLQSAEAFPMNLGFFGKGNSTNETNLIDQVEAGACGLKLHEDWGTTPSTINSCLNVADKFDVQVCIHTDTLNEAGFVEDTINAIAGRTIHTFHTEGAGGGHAPDIIKICGEKNVLPSSTNPTRPYTRNTLEEHLDMLMVCHHLDSKIPEDIAFAESRIRRETIAAEDILHDMGAFSIIASDSQAMGRVGEVITRTFQTAHKMKVQRGPLSQDSDINDNYRVKRYISKVTINPAIAHGIDKHVGSIEKGKIADLALWKPSFFAVKPELVVKGGSIVWSQMGDANASIPTPGPVHGRPMFASFGQSLIKSSFTFLSKNSIDQNIPNKLGLQKKCIAVENTRNINKSHLKLNSKLPNISVDPQTYEVFSDGELLTCEPLDEVPMAQRYFLL.

The Urease domain occupies 131-569 (GSIDTHIHFI…VPMAQRYFLL (439 aa)). Ni(2+)-binding residues include H136, H138, and K219. K219 is subject to N6-carboxylysine. Residue H221 participates in substrate binding. Ni(2+) is bound by residues H248 and H274. H322 (proton donor) is an active-site residue. D362 contributes to the Ni(2+) binding site.

Belongs to the metallo-dependent hydrolases superfamily. Urease alpha subunit family. As to quaternary structure, heterotrimer of UreA (gamma), UreB (beta) and UreC (alpha) subunits. Three heterotrimers associate to form the active enzyme. It depends on Ni cation as a cofactor. Post-translationally, carboxylation allows a single lysine to coordinate two nickel ions.

Its subcellular location is the cytoplasm. The enzyme catalyses urea + 2 H2O + H(+) = hydrogencarbonate + 2 NH4(+). The protein operates within nitrogen metabolism; urea degradation; CO(2) and NH(3) from urea (urease route): step 1/1. This is Urease subunit alpha from Prochlorococcus marinus (strain MIT 9301).